The primary structure comprises 188 residues: dCTP deaminase (188 aa).

DCTP is bound by residues 111–116 (KSTYAR), 135–137 (TLE), glutamine 156, tyrosine 170, and glutamine 180. The Proton donor/acceptor role is filled by glutamate 137.

The protein belongs to the dCTP deaminase family. In terms of assembly, homotrimer.

It catalyses the reaction dCTP + H2O + H(+) = dUTP + NH4(+). Its pathway is pyrimidine metabolism; dUMP biosynthesis; dUMP from dCTP (dUTP route): step 1/2. Its function is as follows. Catalyzes the deamination of dCTP to dUTP. The sequence is that of dCTP deaminase from Thiobacillus denitrificans (strain ATCC 25259 / T1).